The following is a 466-amino-acid chain: ATP synthase subunit beta, sodium ion specific (466 aa).

Position 153 to 160 (153 to 160 (GGAGVGKT)) interacts with ATP.

It belongs to the ATPase alpha/beta chains family. As to quaternary structure, F-type ATPases have 2 components, CF(1) - the catalytic core - and CF(0) - the membrane proton channel. CF(1) has five subunits: alpha(3), beta(3), gamma(1), delta(1), epsilon(1). CF(0) has three main subunits: a, b and c.

It localises to the cell membrane. The catalysed reaction is 4 Na(+)(in) + ATP + H2O = 4 Na(+)(out) + ADP + phosphate + H(+). With respect to regulation, inhibited by nitrate. In terms of biological role, produces ATP from ADP in the presence of a sodium ion gradient across the membrane. The beta chain is the catalytic subunit. The chain is ATP synthase subunit beta, sodium ion specific from Acetobacterium woodii (strain ATCC 29683 / DSM 1030 / JCM 2381 / KCTC 1655 / WB1).